Here is a 302-residue protein sequence, read N- to C-terminus: uncharacterized protein (302 aa).

9 consecutive transmembrane segments (helical) span residues 3 to 23 (ILGVGYFLLGLILLYYGSDWF), 39 to 59 (FVIGATVMAIGTSLPEILTSA), 77 to 97 (SCICNIGLVLGLSAIISPIIV), 106 to 126 (LVYLLFVIFAAVIGIDGFSWI), 128 to 148 (GVVLLILFIIYLRWTVKNGSA), 163 to 183 (FSLVLLIIGLIGVLVGAELFV), 199 to 219 (VIGFTLVAFGTSLPELMVSLA), 227 to 247 (GMVLGNVIGSNIADIGGALAV), and 254 to 274 (LPAENVQMAVLVIMSLLLYLF).

This sequence belongs to the Ca(2+):cation antiporter (CaCA) (TC 2.A.19) family.

It localises to the cell membrane. This is an uncharacterized protein from Methanocaldococcus jannaschii (strain ATCC 43067 / DSM 2661 / JAL-1 / JCM 10045 / NBRC 100440) (Methanococcus jannaschii).